The following is a 78-amino-acid chain: Large ribosomal subunit protein bL28 (78 aa).

Residues 1 to 25 (MSRVCQVTGKRPTVGNNRSHAKNAT) form a disordered region.

The protein belongs to the bacterial ribosomal protein bL28 family.

This is Large ribosomal subunit protein bL28 from Tolumonas auensis (strain DSM 9187 / NBRC 110442 / TA 4).